A 252-amino-acid chain; its full sequence is MSRAHPKQPVTGRNIPILAITMPALKLLCLHGAGMNSEIMKSHLSSLAKTLEYRNIAQFAYAEGSVETEPGPGITPGLYEGPYYSFHIWPPKAGNLQDEESIQNAYEELLEIIDDEGPFDGLLGFSHGGSFLAELLARYARDNPATDVERLARCAVFINSFPPFRNDPDQNPIIDYELLKHFPKIPTLHVVGTSDFVHEYSTILYEKLHQKAPTSTGLVTHSKGHEIPRDPKVLDKVVAGFEKLNFAVSFSH.

Ser126 acts as the Charge relay system in catalysis.

Belongs to the LovG family.

The protein operates within secondary metabolite biosynthesis. Hydrolase; part of the gene cluster that mediates the biosynthesis of the antihypercholesterolemic agents phomoidrides which are dimeric anhydrides. Within the pathway, phiM releases the C12-fatty acyl chain from phiA. The pathway begins with the highly reducing polyketide synthase tstA that catalyzes the formation of a C12-fatty acyl-ACP, starting from one acetate and 5 malonate units. The hydrolase tstM is involved in the release of the C12-fatty acyl chain from phiA. The alkylcitrate synthase (ACS) tstJ and the alkylcitrate dehydratase (ACDH) tstI then give rise to decarboxylated monomeric anhydrides by coupling the C12-fatty acyl chain with oxalacetic acid. The cyclase tstC is responsible for the dimerization of the monomeric anhydrides which leads to the production of prephomoidride that contains the characteristic bicyclo[4.3.1]deca-1,6-diene system of phomoidrides. Iterative oxidation catalyzed by the alpha-ketoglutarate-dependent dioxygenase tstK produced then phomoidride A. Finally, the methyltransferase tstE converts phomoidride A to phomoidride B via an acetalization reaction. The phosphatidylethanolamine-binding protein tstB and tstN are not essential for dimerization and their functions have still to be determined. The polypeptide is Hydrolase phiM (Talaromyces stipitatus (strain ATCC 10500 / CBS 375.48 / QM 6759 / NRRL 1006) (Penicillium stipitatum)).